Here is a 440-residue protein sequence, read N- to C-terminus: D-serine dehydratase (440 aa).

Lys-116 bears the N6-(pyridoxal phosphate)lysine mark.

The protein belongs to the serine/threonine dehydratase family. DsdA subfamily. As to quaternary structure, monomer. It depends on pyridoxal 5'-phosphate as a cofactor.

It carries out the reaction D-serine = pyruvate + NH4(+). The sequence is that of D-serine dehydratase from Salmonella dublin (strain CT_02021853).